Consider the following 394-residue polypeptide: Flavohemoprotein (394 aa).

Positions 1 to 136 (MLSENTINIV…LANVFIQREE (136 aa)) constitute a Globin domain. His-85 provides a ligand contact to heme b. Active-site charge relay system residues include Tyr-95 and Glu-135. Residues 147-394 (GGWRGLREFE…YECFGPHKVV (248 aa)) are reductase. The region spanning 150-255 (RGLREFELVE…AAPAGDFFLD (106 aa)) is the FAD-binding FR-type domain. Residues Tyr-188 and 204 to 207 (RQYS) contribute to the FAD site. Residue 268–273 (GVGLTP) participates in NADP(+) binding. 387-390 (CFGP) lines the FAD pocket.

The protein belongs to the globin family. Two-domain flavohemoproteins subfamily. This sequence in the C-terminal section; belongs to the flavoprotein pyridine nucleotide cytochrome reductase family. Requires heme b as cofactor. FAD serves as cofactor.

It carries out the reaction 2 nitric oxide + NADPH + 2 O2 = 2 nitrate + NADP(+) + H(+). It catalyses the reaction 2 nitric oxide + NADH + 2 O2 = 2 nitrate + NAD(+) + H(+). Its function is as follows. Is involved in NO detoxification in an aerobic process, termed nitric oxide dioxygenase (NOD) reaction that utilizes O(2) and NAD(P)H to convert NO to nitrate, which protects the bacterium from various noxious nitrogen compounds. Therefore, plays a central role in the inducible response to nitrosative stress. This Vibrio vulnificus (strain YJ016) protein is Flavohemoprotein.